Reading from the N-terminus, the 311-residue chain is Putative pyruvate, phosphate dikinase regulatory protein (311 aa).

180 to 187 (GVSRSSKT) serves as a coordination point for ADP.

Belongs to the pyruvate, phosphate/water dikinase regulatory protein family. PDRP subfamily.

It carries out the reaction N(tele)-phospho-L-histidyl/L-threonyl-[pyruvate, phosphate dikinase] + ADP = N(tele)-phospho-L-histidyl/O-phospho-L-threonyl-[pyruvate, phosphate dikinase] + AMP + H(+). The enzyme catalyses N(tele)-phospho-L-histidyl/O-phospho-L-threonyl-[pyruvate, phosphate dikinase] + phosphate + H(+) = N(tele)-phospho-L-histidyl/L-threonyl-[pyruvate, phosphate dikinase] + diphosphate. Bifunctional serine/threonine kinase and phosphorylase involved in the regulation of the pyruvate, phosphate dikinase (PPDK) by catalyzing its phosphorylation/dephosphorylation. The sequence is that of Putative pyruvate, phosphate dikinase regulatory protein from Paramagnetospirillum magneticum (strain ATCC 700264 / AMB-1) (Magnetospirillum magneticum).